Consider the following 43-residue polypeptide: ORF7b protein (43 aa).

The chain crosses the membrane as a helical span at residues 9 to 29; that stretch reads FYLCFLAFLLFLVLIMLIIFW.

The protein localises to the host Golgi apparatus membrane. The protein resides in the host endosome membrane. This Homo sapiens (Human) protein is ORF7b protein.